Here is a 162-residue protein sequence, read N- to C-terminus: uncharacterized protein (162 aa).

The protein belongs to the LOR family.

This is an uncharacterized protein from Bacillus subtilis (strain 168).